We begin with the raw amino-acid sequence, 471 residues long: Alpha-galactosidase (471 aa).

The first 18 residues, 1 to 18 (MSYIYLFITAAAVTGALG), serve as a signal peptide directing secretion. The cysteines at positions 42 and 74 are disulfide-linked. Substrate is bound by residues D72 and D73. N-linked (GlcNAc...) asparagine glycosylation is present at N82. C121 and C151 are oxidised to a cystine. Position 147 (K147) interacts with substrate. D149 (nucleophile) is an active-site residue. N175 is a glycosylation site (N-linked (GlcNAc...) asparagine). Residue R205 coordinates substrate. The active-site Proton donor is D209. Cystine bridges form between C221-C237 and C223-C230. Substrate is bound at residue Q251. N-linked (GlcNAc...) asparagine glycosylation is found at N270, N361, N370, N417, N422, N435, and N454.

Belongs to the glycosyl hydrolase 27 family. As to quaternary structure, homotetramer.

Its subcellular location is the secreted. The enzyme catalyses Hydrolysis of terminal, non-reducing alpha-D-galactose residues in alpha-D-galactosides, including galactose oligosaccharides, galactomannans and galactolipids.. This chain is Alpha-galactosidase (MEL), found in Saccharomyces mikatae (Yeast).